The chain runs to 149 residues: Ribonuclease pancreatic (149 aa).

An N-terminal signal peptide occupies residues 1-25 (MGLEKSLILFPLLVLVLGWVQPSLA). Substrate-binding residues include lysine 32 and arginine 35. Catalysis depends on histidine 37, which acts as the Proton acceptor. Disulfide bonds link cysteine 51–cysteine 109, cysteine 65–cysteine 120, cysteine 83–cysteine 135, and cysteine 90–cysteine 97. Substrate-binding positions include 66–70 (KPVNT), lysine 91, and arginine 110. Histidine 144 functions as the Proton donor in the catalytic mechanism.

Belongs to the pancreatic ribonuclease family. Monomer. Interacts with and forms tight 1:1 complexes with RNH1. Dimerization of two such complexes may occur. Interaction with RNH1 inhibits this protein. As to expression, pancreas.

The protein localises to the secreted. It catalyses the reaction an [RNA] containing cytidine + H2O = an [RNA]-3'-cytidine-3'-phosphate + a 5'-hydroxy-ribonucleotide-3'-[RNA].. It carries out the reaction an [RNA] containing uridine + H2O = an [RNA]-3'-uridine-3'-phosphate + a 5'-hydroxy-ribonucleotide-3'-[RNA].. In terms of biological role, endonuclease that catalyzes the cleavage of RNA on the 3' side of pyrimidine nucleotides. Acts on single-stranded and double-stranded RNA. This Uranomys ruddi (White-bellied brush-furred rat) protein is Ribonuclease pancreatic (RNASE1).